The sequence spans 143 residues: Nucleoside diphosphate kinase (143 aa).

ATP contacts are provided by Lys-11, Phe-59, Arg-87, Thr-93, Arg-104, and Asn-114. Residue His-117 is the Pros-phosphohistidine intermediate of the active site.

This sequence belongs to the NDK family. Homotetramer. Requires Mg(2+) as cofactor.

Its subcellular location is the cytoplasm. It carries out the reaction a 2'-deoxyribonucleoside 5'-diphosphate + ATP = a 2'-deoxyribonucleoside 5'-triphosphate + ADP. It catalyses the reaction a ribonucleoside 5'-diphosphate + ATP = a ribonucleoside 5'-triphosphate + ADP. Major role in the synthesis of nucleoside triphosphates other than ATP. The ATP gamma phosphate is transferred to the NDP beta phosphate via a ping-pong mechanism, using a phosphorylated active-site intermediate. The polypeptide is Nucleoside diphosphate kinase (Shigella boydii serotype 4 (strain Sb227)).